Here is a 287-residue protein sequence, read N- to C-terminus: 4-hydroxybenzoate octaprenyltransferase (287 aa).

The next 7 helical transmembrane spans lie at alanine 30–glycine 50, isoleucine 92–leucine 112, phenylalanine 133–phenylalanine 153, aspartate 158–tyrosine 178, valine 207–alanine 227, tryptophan 232–isoleucine 252, and histidine 266–valine 286.

This sequence belongs to the UbiA prenyltransferase family. Requires Mg(2+) as cofactor.

It localises to the cell inner membrane. The catalysed reaction is all-trans-octaprenyl diphosphate + 4-hydroxybenzoate = 4-hydroxy-3-(all-trans-octaprenyl)benzoate + diphosphate. Its pathway is cofactor biosynthesis; ubiquinone biosynthesis. Functionally, catalyzes the prenylation of para-hydroxybenzoate (PHB) with an all-trans polyprenyl group. Mediates the second step in the final reaction sequence of ubiquinone-8 (UQ-8) biosynthesis, which is the condensation of the polyisoprenoid side chain with PHB, generating the first membrane-bound Q intermediate 3-octaprenyl-4-hydroxybenzoate. The chain is 4-hydroxybenzoate octaprenyltransferase from Burkholderia mallei (strain NCTC 10247).